We begin with the raw amino-acid sequence, 180 residues long: Large ribosomal subunit protein uL6 (180 aa).

Belongs to the universal ribosomal protein uL6 family. As to quaternary structure, part of the 50S ribosomal subunit.

In terms of biological role, this protein binds to the 23S rRNA, and is important in its secondary structure. It is located near the subunit interface in the base of the L7/L12 stalk, and near the tRNA binding site of the peptidyltransferase center. The protein is Large ribosomal subunit protein uL6 of Clostridium botulinum (strain ATCC 19397 / Type A).